Reading from the N-terminus, the 234-residue chain is Sugar fermentation stimulation protein homolog (234 aa).

The protein belongs to the SfsA family.

The protein is Sugar fermentation stimulation protein homolog of Shewanella baltica (strain OS195).